The following is a 135-amino-acid chain: uncharacterized protein (135 aa).

This is an uncharacterized protein from Bacillus subtilis (strain 168).